Reading from the N-terminus, the 96-residue chain is Phosphoribosyl-ATP pyrophosphatase (96 aa).

This sequence belongs to the PRA-PH family.

The protein resides in the cytoplasm. It carries out the reaction 1-(5-phospho-beta-D-ribosyl)-ATP + H2O = 1-(5-phospho-beta-D-ribosyl)-5'-AMP + diphosphate + H(+). The protein operates within amino-acid biosynthesis; L-histidine biosynthesis; L-histidine from 5-phospho-alpha-D-ribose 1-diphosphate: step 2/9. The sequence is that of Phosphoribosyl-ATP pyrophosphatase from Methanococcus aeolicus (strain ATCC BAA-1280 / DSM 17508 / OCM 812 / Nankai-3).